A 297-amino-acid chain; its full sequence is Tyrosine recombinase XerC (297 aa).

Residues 1–83 enclose the Core-binding (CB) domain; it reads MAILDEFDEH…AVKAFTAWAK (83 aa). The Tyr recombinase domain occupies 104-291; sequence TLPAVLRQDQ…AVSRLRVVHD (188 aa). Active-site residues include arginine 148, lysine 172, histidine 243, arginine 246, and histidine 269. The active-site O-(3'-phospho-DNA)-tyrosine intermediate is tyrosine 278.

It belongs to the 'phage' integrase family. XerC subfamily. Forms a cyclic heterotetrameric complex composed of two molecules of XerC and two molecules of XerD.

It is found in the cytoplasm. Functionally, site-specific tyrosine recombinase, which acts by catalyzing the cutting and rejoining of the recombining DNA molecules. The XerC-XerD complex is essential to convert dimers of the bacterial chromosome into monomers to permit their segregation at cell division. It also contributes to the segregational stability of plasmids. The protein is Tyrosine recombinase XerC of Mycobacterium leprae (strain TN).